The following is a 946-amino-acid chain: MSDNLLSLENPVVPSHYELRLEIDPKQSSPNFKGSAIIHLKFNPNSTTLASIEDSFTQFKLHSKDLIVLSAHATIGSTKFDLKISQDTGKHLSIFNSESPIQLSNDCPLILSVQYVGKIRDIKTHHDKTFGIFKTNFMDRKTGTANNHVVATHCQPFSASNIFPCIDEPSNKSTFQLNIATDAQYKAVSNTPVEMVEALDSSQKHLVKFAKTPLMTTSVFGFSIGDLEFLKTEIKLEGDRTIPVSIYAPWDIANAAFTLDTVQKYLPLLESYFKCPYPLPKLDFVLLPYLSDMAMENFGMITIQLNHLLIPPNALANETVREQAQQLIVHELVHQWMGNYISFDSWESLWFNESFATWLACHILEQNGDLSHYWTSEPYLLQQVEPTMCRDAADVNGRSIFQIAQRNTGIDSQTSDIFDPEAYTKGIIMLRSLQLATGESHLQKGLESVFEDTKTFHARSVKPMDIWNHIGKFLKSQNITNFVSSWTRTPGLPVVKVEVEEKDGKTQTKLTQHRFINQLSTEEKDQLEDVPYQVPLFGVLPDGKMDTKNVLLTDRTLKFDYPILVINHLAQGYYRVSYESEECYALINDKITEETLSEIDLRKIFLDLSQFIGDEGFQNSIHLHGLFKILNHIASPSTKIASKYWDPLSKGLEVLQTIDRASLTSSKLQSFLKKKIVIPLFNKIDWPHGEFDKSTNPHELKVMSQVLFLNKNSAKCAELCQIYFKHLLQGPRSSVPLELVNSILVVVSQHCANIKQWKKIFDLVKRSSCTGITNHVINMYDQNSSETAMLIQNGAIESLGFCLDSDIVKKTLNFITSNIESEGMELALFGFNYNFKKRLNKNEKPQDQVVRETIWEWYMGNFDQWARKATRKGTTTGDHLHKALRSISLIIFQMFVADEPQKIEKFINLEKEKLGQSLLSLDDIWASVQQDEESRKTIRRDLASLV.

An N-acetylserine modification is found at Ser2. 293–297 (MAMEN) serves as a coordination point for substrate. His330 contacts Zn(2+). Glu331 acts as the Proton acceptor in catalysis. Residues His334 and Glu353 each contribute to the Zn(2+) site.

Belongs to the peptidase M1 family. In terms of assembly, associates with ribosomal complexes. It depends on Zn(2+) as a cofactor.

The protein localises to the cytoplasm. Putative zinc aminopeptidase which may be involved in ribosome biogenesis. The protein is Protein TMA108 (TMA108) of Saccharomyces cerevisiae (strain ATCC 204508 / S288c) (Baker's yeast).